The primary structure comprises 64 residues: Toxin BmKIT3 (64 aa).

The region spanning 1–61 is the LCN-type CS-alpha/beta domain; the sequence is DGYIRGSNGC…TWKSESNTCG (61 aa). Cystine bridges form between C10–C60, C14–C35, C21–C42, and C25–C44. Position 60 is a cysteine amide (C60).

The protein belongs to the long (4 C-C) scorpion toxin superfamily. Sodium channel inhibitor family. Beta subfamily. Expressed by the venom gland.

Its subcellular location is the secreted. In terms of biological role, depressant insect beta-toxins cause a transient contraction paralysis followed by a slow flaccid paralysis. They bind voltage-independently at site-4 of sodium channels (Nav) and shift the voltage of activation toward more negative potentials thereby affecting sodium channel activation and promoting spontaneous and repetitive firing. This is Toxin BmKIT3 from Olivierus martensii (Manchurian scorpion).